A 957-amino-acid polypeptide reads, in one-letter code: Glycine dehydrogenase (decarboxylating) (957 aa).

An N6-(pyridoxal phosphate)lysine modification is found at Lys708.

The protein belongs to the GcvP family. In terms of assembly, the glycine cleavage system is composed of four proteins: P, T, L and H. Pyridoxal 5'-phosphate serves as cofactor.

It carries out the reaction N(6)-[(R)-lipoyl]-L-lysyl-[glycine-cleavage complex H protein] + glycine + H(+) = N(6)-[(R)-S(8)-aminomethyldihydrolipoyl]-L-lysyl-[glycine-cleavage complex H protein] + CO2. Its function is as follows. The glycine cleavage system catalyzes the degradation of glycine. The P protein binds the alpha-amino group of glycine through its pyridoxal phosphate cofactor; CO(2) is released and the remaining methylamine moiety is then transferred to the lipoamide cofactor of the H protein. In Escherichia coli (strain K12 / MC4100 / BW2952), this protein is Glycine dehydrogenase (decarboxylating).